We begin with the raw amino-acid sequence, 68 residues long: Large ribosomal subunit protein uL29 (68 aa).

Belongs to the universal ribosomal protein uL29 family.

The chain is Large ribosomal subunit protein uL29 from Streptococcus sanguinis (strain SK36).